A 223-amino-acid polypeptide reads, in one-letter code: Type 3 secretion system stator protein (223 aa).

Belongs to the SctL stator family. As to quaternary structure, the core secretion machinery of the T3SS is composed of approximately 20 different proteins, including cytoplasmic components, a base, an export apparatus and a needle. This subunit is part of the cytosolic complex. Interacts directly with YscN/SctN (T3SS ATPase) and YscQ/SctQ (the major sorting platform component). Forms homodimers.

It localises to the cytoplasm. Component of the type III secretion system (T3SS), also called injectisome, which is used to inject bacterial effector proteins into eukaryotic host cells. Acts as a regulator of the YscN/SctN ATPase activity. Overexpression of YscL/SctL abolishes type III secretion and down-regulates the expression of secretion apparatus components. The protein is Type 3 secretion system stator protein of Yersinia enterocolitica.